Here is a 160-residue protein sequence, read N- to C-terminus: Leucokinin (160 aa).

Positions 1 to 19 are cleaved as a signal peptide; that stretch reads MAKIVLCMVLLAFGRQVYG. The propeptide occupies 20 to 130; it reads ASLVPAPISE…RIKSQLQRDE (111 aa). Position 147 is a glycine amide (Gly-147). Residues 151-160 constitute a propeptide that is removed on maturation; it reads SPEPPILPDY.

The protein localises to the secreted. Its function is as follows. Acts through intracellular calcium in Malpighian tubule stellate cells to raise chloride conductance. In Drosophila melanogaster (Fruit fly), this protein is Leucokinin (Lk).